The following is a 752-amino-acid chain: Endo-1,4-beta-xylanase 3 (752 aa).

Residues 1–22 (MEKNTNTNHTSDDNNDKNHTNE) are disordered. Positions 10-22 (TSDDNNDKNHTNE) are enriched in basic and acidic residues. CBM-cenC domains lie at 26 to 163 (KIIL…EGPP) and 197 to 344 (NIVE…VQGP). The GH10 domain occupies 397–692 (FPYIVKVKQT…NEAGKRFLEV (296 aa)). Residue E526 is the Proton donor of the active site. E627 (nucleophile) is an active-site residue.

The protein belongs to the glycosyl hydrolase 10 (cellulase F) family. Confined to immature xylems.

It carries out the reaction Endohydrolysis of (1-&gt;4)-beta-D-xylosidic linkages in xylans.. It functions in the pathway glycan degradation; xylan degradation. In terms of biological role, binds to and hydrolyzes insoluble and soluble xylan substrates. The protein is Endo-1,4-beta-xylanase 3 of Arabidopsis thaliana (Mouse-ear cress).